The primary structure comprises 211 residues: Thymidylate kinase (211 aa).

Residue 10–17 participates in ATP binding; the sequence is GGDGVGKS.

This sequence belongs to the thymidylate kinase family.

It catalyses the reaction dTMP + ATP = dTDP + ADP. Functionally, phosphorylation of dTMP to form dTDP in both de novo and salvage pathways of dTTP synthesis. The polypeptide is Thymidylate kinase (Clavibacter sepedonicus (Clavibacter michiganensis subsp. sepedonicus)).